A 126-amino-acid polypeptide reads, in one-letter code: Fluoride-specific ion channel FluC (126 aa).

4 helical membrane-spanning segments follow: residues 4–24, 35–55, 67–87, and 97–117; these read SLLS…FVGL, LGTI…IALF, FVIT…AEVI, and FAIA…VLGL. Positions 74 and 77 each coordinate Na(+).

This sequence belongs to the fluoride channel Fluc/FEX (TC 1.A.43) family.

It localises to the cell inner membrane. The enzyme catalyses fluoride(in) = fluoride(out). Na(+) is not transported, but it plays an essential structural role and its presence is essential for fluoride channel function. Functionally, fluoride-specific ion channel. Important for reducing fluoride concentration in the cell, thus reducing its toxicity. This is Fluoride-specific ion channel FluC from Acinetobacter baylyi (strain ATCC 33305 / BD413 / ADP1).